Here is an 81-residue protein sequence, read N- to C-terminus: ATP synthase subunit c (81 aa).

A run of 2 helical transmembrane segments spans residues 6–26 (ASAS…GPGI) and 57–77 (LAFM…LLFA).

This sequence belongs to the ATPase C chain family. As to quaternary structure, F-type ATPases have 2 components, F(1) - the catalytic core - and F(0) - the membrane proton channel. F(1) has five subunits: alpha(3), beta(3), gamma(1), delta(1), epsilon(1). F(0) has four main subunits: a(1), b(1), b'(1) and c(10-14). The alpha and beta chains form an alternating ring which encloses part of the gamma chain. F(1) is attached to F(0) by a central stalk formed by the gamma and epsilon chains, while a peripheral stalk is formed by the delta, b and b' chains.

Its subcellular location is the cellular thylakoid membrane. F(1)F(0) ATP synthase produces ATP from ADP in the presence of a proton or sodium gradient. F-type ATPases consist of two structural domains, F(1) containing the extramembraneous catalytic core and F(0) containing the membrane proton channel, linked together by a central stalk and a peripheral stalk. During catalysis, ATP synthesis in the catalytic domain of F(1) is coupled via a rotary mechanism of the central stalk subunits to proton translocation. Functionally, key component of the F(0) channel; it plays a direct role in translocation across the membrane. A homomeric c-ring of between 10-14 subunits forms the central stalk rotor element with the F(1) delta and epsilon subunits. This is ATP synthase subunit c from Gloeothece citriformis (strain PCC 7424) (Cyanothece sp. (strain PCC 7424)).